The following is a 147-amino-acid chain: Large ribosomal subunit protein uL13 (147 aa).

This sequence belongs to the universal ribosomal protein uL13 family. In terms of assembly, part of the 50S ribosomal subunit.

This protein is one of the early assembly proteins of the 50S ribosomal subunit, although it is not seen to bind rRNA by itself. It is important during the early stages of 50S assembly. The chain is Large ribosomal subunit protein uL13 from Lactiplantibacillus plantarum (strain ATCC BAA-793 / NCIMB 8826 / WCFS1) (Lactobacillus plantarum).